We begin with the raw amino-acid sequence, 534 residues long: Lysophosphatidylcholine acyltransferase 1 (534 aa).

The tract at residues 1–25 is disordered; that stretch reads MRLRGRGPRAAPSSSSGAGDARRLA. Residues 1 to 57 lie on the Cytoplasmic side of the membrane; that stretch reads MRLRGRGPRAAPSSSSGAGDARRLAPPGRNPFVHELRLSALQKAQVAFMTLTLFPIR. Residues 8–19 show a composition bias toward low complexity; that stretch reads PRAAPSSSSGAG. The chain crosses the membrane as a helical; Signal-anchor for type II membrane protein span at residues 58-78; it reads LLFAAFMMLLAWPFALLASLG. At 79–534 the chain is on the lumenal side; sequence PPDKEPEQPL…GRKNSCKKAD (456 aa). Positions 135–140 match the HXXXXD motif motif; that stretch reads HSSYFD. EF-hand domains lie at 379-414 and 451-486; these read PVSDALEDMFSLFDESGGGEIDLREYVVALSVVCRP and VSELTVTDLFQAIDQEDKGRITFDDFCGFAEMYPDY. Residues D392, S394, E398, and E403 each contribute to the Ca(2+) site. The short motif at 531-534 is the Di-lysine motif element; sequence KKAD.

The protein belongs to the 1-acyl-sn-glycerol-3-phosphate acyltransferase family. As to expression, predominantly expressed in lung where it is enriched in alveolar type II cells. Expressed at lower levels in spleen and brain. Also detected in erythroleukemic cells and reticulocytes. Weakly or not expressed in other tissues.

It is found in the endoplasmic reticulum membrane. The protein localises to the golgi apparatus membrane. Its subcellular location is the cell membrane. The protein resides in the lipid droplet. It carries out the reaction a 1-acyl-sn-glycero-3-phosphocholine + an acyl-CoA = a 1,2-diacyl-sn-glycero-3-phosphocholine + CoA. It catalyses the reaction a 1-O-alkyl-sn-glycero-3-phosphocholine + acetyl-CoA = a 1-O-alkyl-2-acetyl-sn-glycero-3-phosphocholine + CoA. The enzyme catalyses a 1-acyl-sn-glycero-3-phosphate + an acyl-CoA = a 1,2-diacyl-sn-glycero-3-phosphate + CoA. The catalysed reaction is a 1-O-(1Z-alkenyl)-sn-glycero-3-phosphocholine + an acyl-CoA = a 1-O-(1Z-alkenyl)-2-acyl-sn-glycero-3-phosphocholine + CoA. It carries out the reaction 1-acyl-sn-glycero-3-phospho-(1'-sn-glycerol) + an acyl-CoA = a 1,2-diacyl-sn-glycero-3-phospho-(1'-sn-glycerol) + CoA. It catalyses the reaction 1-hexadecanoyl-sn-glycero-3-phosphocholine + hexadecanoyl-CoA = 1,2-dihexadecanoyl-sn-glycero-3-phosphocholine + CoA. The enzyme catalyses 1-O-hexadecyl-sn-glycero-3-phosphocholine + hexadecanoyl-CoA = 1-O-hexadecyl-2-hexadecanoyl-sn-glycero-3-phosphocholine + CoA. The catalysed reaction is a 1-O-(1Z-alkenyl)-sn-glycero-3-phosphocholine + hexadecanoyl-CoA = 1-O-(1Z)-alkenyl-2-hexadecanoyl-sn-glycero-3-phosphocholine + CoA. It carries out the reaction 1-hexadecanoyl-sn-glycero-3-phospho-(1'-sn-glycerol) + hexadecanoyl-CoA = 1,2-dihexadecanoyl-sn-glycero-3-phospho-(1'-sn-glycerol) + CoA. It catalyses the reaction 1-dodecanoyl-sn-glycero-3-phosphocholine + hexadecanoyl-CoA = 1-dodecanoyl-2-hexadecanoyl-sn-glycero-3-phosphocholine + CoA. The enzyme catalyses 1-tetradecanoyl-sn-glycero-3-phosphocholine + hexadecanoyl-CoA = 1-tetradecanoyl-2-hexadecanoyl-sn-glycero-3-phosphocholine + CoA. The catalysed reaction is 1-O-octadecyl-sn-glycero-3-phosphocholine + hexadecanoyl-CoA = 1-O-octadecyl-2-hexadecanoyl-sn-glycero-3-phosphocholine + CoA. It carries out the reaction 1-octadecanoyl-sn-glycero-3-phosphocholine + hexadecanoyl-CoA = 1-octadecanoyl-2-hexadecanoyl-sn-glycero-3-phosphocholine + CoA. It catalyses the reaction 1-(9Z-octadecenoyl)-sn-glycero-3-phosphocholine + hexadecanoyl-CoA = 1-(9Z-octadecenoyl)-2-hexadecanoyl-sn-glycero-3-phosphocholine + CoA. The enzyme catalyses 1-eicosanoyl-sn-glycero-3-phosphocholine + hexadecanoyl-CoA = 1-eicosanoyl-2-hexadecanoyl-sn-glycero-3-phosphocholine + CoA. The catalysed reaction is hexanoyl-CoA + 1-hexadecanoyl-sn-glycero-3-phosphocholine = 1-hexadecanoyl-2-hexanoyl-sn-glycero-3-phosphocholine + CoA. It carries out the reaction octanoyl-CoA + 1-hexadecanoyl-sn-glycero-3-phosphocholine = 1-hexadecanoyl-2-octanoyl-sn-glycero-3-phosphocholine + CoA. It catalyses the reaction decanoyl-CoA + 1-hexadecanoyl-sn-glycero-3-phosphocholine = 1-hexadecanoyl-2-decanoyl-sn-glycero-3-phosphocholine + CoA. The enzyme catalyses dodecanoyl-CoA + 1-hexadecanoyl-sn-glycero-3-phosphocholine = 1-hexadecanoyl-2-dodecanoyl-sn-glycero-3-phosphocholine + CoA. The catalysed reaction is tetradecanoyl-CoA + 1-hexadecanoyl-sn-glycero-3-phosphocholine = 1-hexadecanoyl-2-tetradecanoyl-sn-glycero-3-phosphocholine + CoA. It carries out the reaction 1-hexadecanoyl-sn-glycero-3-phosphocholine + (9Z)-octadecenoyl-CoA = 1-hexadecanoyl-2-(9Z-octadecenoyl)-sn-glycero-3-phosphocholine + CoA. It catalyses the reaction (9Z,12Z)-octadecadienoyl-CoA + 1-hexadecanoyl-sn-glycero-3-phosphocholine = 1-hexadecanoyl-2-(9Z,12Z-octadecadienoyl)-sn-glycero-3-phosphocholine + CoA. The enzyme catalyses (4Z,7Z,10Z,13Z,16Z,19Z)-docosahexaenoyl-CoA + 1-hexadecanoyl-sn-glycero-3-phosphocholine = 1-hexadecanoyl-2-(4Z,7Z,10Z,13Z,16Z,19Z-docosahexaenoyl)-sn-glycero-3-phosphocholine + CoA. The catalysed reaction is 1-hexadecanoyl-sn-glycero-3-phosphocholine + acetyl-CoA = 1-hexadecanoyl-2-acetyl-sn-glycero-3-phosphocholine + CoA. It carries out the reaction eicosanoyl-CoA + 1-hexadecanoyl-sn-glycero-3-phosphocholine = 1-hexadecanoyl-2-eicosanoyl-sn-glycero-3-phosphocholine + CoA. It catalyses the reaction 1-O-hexadecyl-sn-glycero-3-phosphocholine + acetyl-CoA = 1-O-hexadecyl-2-acetyl-sn-glycero-3-phosphocholine + CoA. The enzyme catalyses a 1-acyl-sn-glycero-3-phosphocholine + hexadecanoyl-CoA = 1-acyl-2-hexadecanoyl-sn-glycero-3-phosphocholine + CoA. The catalysed reaction is a 1-acyl-sn-glycero-3-phosphate + hexadecanoyl-CoA = 1-acyl-2-hexadecanoyl-sn-glycero-3-phosphate + CoA. It carries out the reaction 1-acyl-sn-glycero-3-phospho-(1'-sn-glycerol) + hexadecanoyl-CoA = 1-acyl-2-hexadecanoyl-sn-glycero-3-phospho-(1'-sn-glycerol) + CoA. It participates in lipid metabolism; phospholipid metabolism. Its activity is regulated as follows. Not activated by inflammatory stimulation. Inhibited by Cu(2+), Fe(2+), Ca(2+) and Mg(2+). Activity is not affected by Co(2+) or Mn(2+). Its function is as follows. Exhibits both acyltransferase and acetyltransferase activities. Activity is calcium-independent. Catalyzes the conversion of lysophosphatidylcholine (1-acyl-sn-glycero-3-phosphocholine or LPC) into phosphatidylcholine (1,2-diacyl-sn-glycero-3-phosphocholine or PC). Catalyzes the conversion 1-acyl-sn-glycerol-3-phosphate (lysophosphatidic acid or LPA) into 1,2-diacyl-sn-glycerol-3-phosphate (phosphatidic acid or PA) by incorporating an acyl moiety at the sn-2 position of the glycerol backbone. Displays a clear preference for saturated fatty acyl-CoAs, and 1-myristoyl or 1-palmitoyl LPC as acyl donors and acceptors, respectively. Involved in platelet-activating factor (PAF) biosynthesis by catalyzing the conversion of the PAF precursor, 1-O-alkyl-sn-glycero-3-phosphocholine (lyso-PAF) into 1-O-alkyl-2-acetyl-sn-glycero-3-phosphocholine (PAF). May synthesize phosphatidylcholine in pulmonary surfactant, thereby playing a pivotal role in respiratory physiology. Involved in the regulation of lipid droplet number and size. This chain is Lysophosphatidylcholine acyltransferase 1 (Lpcat1), found in Mus musculus (Mouse).